The following is a 217-amino-acid chain: Large ribosomal subunit protein uL29m (217 aa).

Belongs to the universal ribosomal protein uL29 family. In terms of assembly, component of the mitochondrial large ribosomal subunit. Mature mitochondrial ribosomes consist of a small (37S) and a large (54S) subunit. The 37S subunit contains at least 33 different proteins and 1 molecule of RNA (15S). The 54S subunit contains at least 45 different proteins and 1 molecule of RNA (21S).

Its subcellular location is the mitochondrion. The chain is Large ribosomal subunit protein uL29m (mrpl4) from Aspergillus clavatus (strain ATCC 1007 / CBS 513.65 / DSM 816 / NCTC 3887 / NRRL 1 / QM 1276 / 107).